Reading from the N-terminus, the 509-residue chain is ATP synthase subunit alpha (509 aa).

Position 169–176 (169–176) interacts with ATP; the sequence is GDRQTGKT.

Belongs to the ATPase alpha/beta chains family. F-type ATPases have 2 components, CF(1) - the catalytic core - and CF(0) - the membrane proton channel. CF(1) has five subunits: alpha(3), beta(3), gamma(1), delta(1), epsilon(1). CF(0) has three main subunits: a(1), b(2) and c(9-12). The alpha and beta chains form an alternating ring which encloses part of the gamma chain. CF(1) is attached to CF(0) by a central stalk formed by the gamma and epsilon chains, while a peripheral stalk is formed by the delta and b chains.

The protein localises to the cell inner membrane. It carries out the reaction ATP + H2O + 4 H(+)(in) = ADP + phosphate + 5 H(+)(out). Functionally, produces ATP from ADP in the presence of a proton gradient across the membrane. The alpha chain is a regulatory subunit. In Mesorhizobium japonicum (strain LMG 29417 / CECT 9101 / MAFF 303099) (Mesorhizobium loti (strain MAFF 303099)), this protein is ATP synthase subunit alpha.